Consider the following 282-residue polypeptide: Probable septum site-determining protein MinC (282 aa).

The segment at 108–127 (AAARSADEESANAAAAAPAA) is disordered. Low complexity predominate over residues 118–127 (ANAAAAAPAA).

It belongs to the MinC family. Interacts with MinD and FtsZ.

In terms of biological role, cell division inhibitor that blocks the formation of polar Z ring septums. Rapidly oscillates between the poles of the cell to destabilize FtsZ filaments that have formed before they mature into polar Z rings. Prevents FtsZ polymerization. In Paraburkholderia xenovorans (strain LB400), this protein is Probable septum site-determining protein MinC.